We begin with the raw amino-acid sequence, 503 residues long: Cytochrome P450 monooxygenase ecdH (503 aa).

Residues 8–24 traverse the membrane as a helical segment; that stretch reads TTLLCGVISSTLLLLLL. N-linked (GlcNAc...) asparagine glycosylation is found at Asn64, Asn324, and Asn413. Cys449 lines the heme pocket.

This sequence belongs to the cytochrome P450 family. The cofactor is heme.

It is found in the membrane. The protein operates within antifungal biosynthesis. Functionally, cytochrome P450 monooxygenase; part of the gene cluster that mediates the biosynthesis of echinocandin B, a fungal lipidated cyclic hexapeptide that acts as an antifungal agent. Linoleoyl-AMP, produced by the fatty-acyl-AMP ligase ecdI, is transferred to the initiation carrier domain (T0) of ecdA. The linoleoyl-S-phosphopantetheinyl-T0 is sequentially extended with L-ornithine, L-threonine, L-proline, L-homotyrosine, L-threonine, and 4R-methyl-L-proline to form the linear hexapeptide. Thereafter, the terminal condensation (C7) performs macrocyclization of the NRPS product and the cyclic scaffold is released from ecdA. All six of the amino acid residues are hydroxylated, including 4R,5R-dihydroxy-L-ornithine, 4R-hydroxyl-L-proline, 3S,4S-dihydroxy-L-homotyrosine, and 3S-hydroxyl-4S-methyl-L-prolin. In the pathway, all the hydroxylation reactions are proposed to occur following completion of the cyclic peptide, so the unhydroxylated precursor produced by ecdA will undergo six rounds of hydroxylation. Five hydroxylase genes (ecdG, ecdH, ecdK, htyE and htyF) are embedded within the echinocandin B (ecd) and L-homotyrosine (hty) clusters. The sequence is that of Cytochrome P450 monooxygenase ecdH from Aspergillus rugulosus (Emericella rugulosa).